The sequence spans 65 residues: Large ribosomal subunit protein bL35 (65 aa).

The segment at 1–51 (MPKMKTNRAAAKRFKKTANGGLKSANAYTSHRFHGKTKKQRRQLRGTDMMD) is disordered. The segment covering 31–44 (HRFHGKTKKQRRQL) has biased composition (basic residues).

This sequence belongs to the bacterial ribosomal protein bL35 family.

The sequence is that of Large ribosomal subunit protein bL35 from Pediococcus pentosaceus (strain ATCC 25745 / CCUG 21536 / LMG 10740 / 183-1w).